A 552-amino-acid polypeptide reads, in one-letter code: FERRY endosomal RAB5 effector complex subunit 3 (552 aa).

The residue at position 79 (serine 79) is a Phosphoserine.

In terms of assembly, component of the FERRY complex composed of five subunits, TBCK, PPP1R21, FERRY3, CRYZL1 and GATD1 with a ratio of 1:2:1:2:4, respectively.

The protein localises to the cytoplasm. The protein resides in the early endosome. Functionally, component of the FERRY complex (Five-subunit Endosomal Rab5 and RNA/ribosome intermediary). The FERRY complex directly interacts with mRNAs and RAB5A, and functions as a RAB5A effector involved in the localization and the distribution of specific mRNAs most likely by mediating their endosomal transport. The complex recruits mRNAs and ribosomes to early endosomes through direct mRNA-interaction. Plays a role in mast cell degranulation. In Rattus norvegicus (Rat), this protein is FERRY endosomal RAB5 effector complex subunit 3.